The primary structure comprises 169 residues: Cell division inhibitor SulA (169 aa).

Residues 106 to 112 (ALRTGNY) form a ftsZ binding region. Positions 162 to 169 (KIHSNLYH) are lon protease binding.

It belongs to the SulA family. Interacts with FtsZ. Is rapidly cleaved and degraded by the Lon protease once DNA damage is repaired.

Its function is as follows. Component of the SOS system and an inhibitor of cell division. Accumulation of SulA causes rapid cessation of cell division and the appearance of long, non-septate filaments. In the presence of GTP, binds a polymerization-competent form of FtsZ in a 1:1 ratio, thus inhibiting FtsZ polymerization and therefore preventing it from participating in the assembly of the Z ring. This mechanism prevents the premature segregation of damaged DNA to daughter cells during cell division. The polypeptide is Cell division inhibitor SulA (Escherichia coli O45:K1 (strain S88 / ExPEC)).